We begin with the raw amino-acid sequence, 445 residues long: MQQGSAPNSAPKISFVSLGCPKALVDSERIITRLRAEGYELARKHDGADVVIVNTCGFLDSAKQESLAAIGSAMAENGKVIVTGCMGAEPEQIEQAYPGVLSITGPQQYESVLDAVHRASPPVHNPHLDLVPPQGIKLTPRHYAYLKISEGCNNRCSFCIIPKLRGDLVSRPAADVLREAERLVAAGVKELLVISQDTSAYGLDIKYAESPWKDRSVRARFLDLARELGELGAWVRLHYVYPYPHVDEVIGLMTDGKVLPYLDIPFQHASPNVLKAMRRPAAQDKTLDRIKAWRGACPDLALRSTFIVGFPGETDEDFAYLLDWLDEAEIDRLGCFKYEPVAGATSNALPGQVPDEVKQERWNALMARQQKISARRLKRKVGTRQQIIIDEVGPTVAKGRSKADAPEIDGAVYLSSRRPLRAGEIVTAKIERADEYDLHGTVAGF.

The MTTase N-terminal domain occupies 11–121 (PKISFVSLGC…VLDAVHRASP (111 aa)). Residues Cys-20, Cys-56, Cys-85, Cys-152, Cys-156, and Cys-159 each contribute to the [4Fe-4S] cluster site. One can recognise a Radical SAM core domain in the interval 138–375 (LTPRHYAYLK…MARQQKISAR (238 aa)). Residues 378 to 444 (KRKVGTRQQI…EYDLHGTVAG (67 aa)) form the TRAM domain.

It belongs to the methylthiotransferase family. RimO subfamily. [4Fe-4S] cluster serves as cofactor.

It localises to the cytoplasm. The catalysed reaction is L-aspartate(89)-[ribosomal protein uS12]-hydrogen + (sulfur carrier)-SH + AH2 + 2 S-adenosyl-L-methionine = 3-methylsulfanyl-L-aspartate(89)-[ribosomal protein uS12]-hydrogen + (sulfur carrier)-H + 5'-deoxyadenosine + L-methionine + A + S-adenosyl-L-homocysteine + 2 H(+). In terms of biological role, catalyzes the methylthiolation of an aspartic acid residue of ribosomal protein uS12. The protein is Ribosomal protein uS12 methylthiotransferase RimO of Bradyrhizobium sp. (strain ORS 278).